Reading from the N-terminus, the 288-residue chain is Nucleotide-binding protein AHA_3920 (288 aa).

ATP is bound at residue 8–15 (GRSGSGKT). Residue 56–59 (DVRN) coordinates GTP.

The protein belongs to the RapZ-like family.

Functionally, displays ATPase and GTPase activities. This chain is Nucleotide-binding protein AHA_3920, found in Aeromonas hydrophila subsp. hydrophila (strain ATCC 7966 / DSM 30187 / BCRC 13018 / CCUG 14551 / JCM 1027 / KCTC 2358 / NCIMB 9240 / NCTC 8049).